The primary structure comprises 92 residues: Small ribosomal subunit protein bS20 (92 aa).

The segment at 1-23 is disordered; sequence MANSPSAKKRAIQAEKRRSHNAS.

Belongs to the bacterial ribosomal protein bS20 family.

In terms of biological role, binds directly to 16S ribosomal RNA. In Stutzerimonas stutzeri (strain A1501) (Pseudomonas stutzeri), this protein is Small ribosomal subunit protein bS20.